The following is a 256-amino-acid chain: Sec-independent protein translocase protein TatC (256 aa).

6 consecutive transmembrane segments (helical) span residues 25–45 (VICV…IYHF), 77–97 (AIVA…AFIA), 117–137 (ILFY…VFSF), 158–178 (FALA…AIIL), 195–215 (PYII…DVFS), and 217–237 (TLLA…ARFY).

Belongs to the TatC family. The Tat system comprises two distinct complexes: a TatABC complex, containing multiple copies of TatA, TatB and TatC subunits, and a separate TatA complex, containing only TatA subunits. Substrates initially bind to the TatABC complex, which probably triggers association of the separate TatA complex to form the active translocon.

It is found in the cell inner membrane. Functionally, part of the twin-arginine translocation (Tat) system that transports large folded proteins containing a characteristic twin-arginine motif in their signal peptide across membranes. Together with TatB, TatC is part of a receptor directly interacting with Tat signal peptides. The protein is Sec-independent protein translocase protein TatC of Haemophilus influenzae (strain ATCC 51907 / DSM 11121 / KW20 / Rd).